The chain runs to 406 residues: Exodeoxyribonuclease 7 large subunit (406 aa).

This sequence belongs to the XseA family. As to quaternary structure, heterooligomer composed of large and small subunits.

Its subcellular location is the cytoplasm. It catalyses the reaction Exonucleolytic cleavage in either 5'- to 3'- or 3'- to 5'-direction to yield nucleoside 5'-phosphates.. Its function is as follows. Bidirectionally degrades single-stranded DNA into large acid-insoluble oligonucleotides, which are then degraded further into small acid-soluble oligonucleotides. This is Exodeoxyribonuclease 7 large subunit from Desulforudis audaxviator (strain MP104C).